The primary structure comprises 492 residues: Adenosylhomocysteinase (492 aa).

Substrate-binding residues include Thr68, Asp153, and Glu215. 216-218 is an NAD(+) binding site; it reads TTT. Residues Lys245 and Asp249 each coordinate substrate. Residues Asn250, 279–284, Glu302, Asn337, 358–360, and Asn406 contribute to the NAD(+) site; these read GYGDVG and IGH.

Belongs to the adenosylhomocysteinase family. NAD(+) is required as a cofactor.

The protein localises to the cytoplasm. It catalyses the reaction S-adenosyl-L-homocysteine + H2O = L-homocysteine + adenosine. It participates in amino-acid biosynthesis; L-homocysteine biosynthesis; L-homocysteine from S-adenosyl-L-homocysteine: step 1/1. In terms of biological role, may play a key role in the regulation of the intracellular concentration of adenosylhomocysteine. The sequence is that of Adenosylhomocysteinase from Mycobacterium leprae (strain Br4923).